Reading from the N-terminus, the 287-residue chain is Probable ABC transporter extracellular-binding protein YckB (287 aa).

The signal sequence occupies residues 1–24 (MKSFMHSKAVIFSFTMAFFLILAA). A lipid anchor (N-palmitoyl cysteine) is attached at Cys-25. Cys-25 is lipidated: S-diacylglycerol cysteine.

This sequence belongs to the bacterial solute-binding protein 3 family.

Its subcellular location is the cell membrane. Probably part of a binding-protein-dependent transport system. This chain is Probable ABC transporter extracellular-binding protein YckB (yckB), found in Bacillus subtilis (strain 168).